The primary structure comprises 774 residues: Transforming acidic coiled-coil-containing protein 1 (774 aa).

Ala2 is subject to N-acetylalanine. An interaction with LSM7 and SNRPG region spans residues 2 to 56 (AFSPWQILSPVQWAKWTWSAVRGSGAGEDEAGGPEGDPEEEEDSQAETKSLSFSS). Phosphoserine is present on residues Ser4, Ser10, and Ser45. The segment at 21–142 (AVRGSGAGED…VKDVRGKAEH (122 aa)) is disordered. Positions 28 to 46 (GEDEAGGPEGDPEEEEDSQ) are enriched in acidic residues. Positions 48-61 (ETKSLSFSSDSEGN) are enriched in polar residues. Residues 88–99 (PEAKPQESREAD) show a composition bias toward basic and acidic residues. The span at 113 to 128 (DTCSRSSENEAPQATV) shows a compositional bias: polar residues. Residues 131–142 (HPVKDVRGKAEH) are compositionally biased toward basic and acidic residues. Ser148 and Ser154 each carry phosphoserine. The interaction with TDRD7 stretch occupies residues 153–255 (FSIETRNCTD…PEMLMEGSPL (103 aa)). Positions 207–424 (EAFTEASLKT…NNINTDDSGD (218 aa)) are interaction with YEATS4. The disordered stretch occupies residues 214 to 428 (LKTGGPCPEP…TDDSGDPCKP (215 aa)). SPAZ domains follow at residues 216-294 (TGGP…TAGV) and 354-504 (SKPV…TDEE). Ser228 is modified (phosphoserine; by AURKC). Residues 228 to 241 (SKLRKPKPVSLRKK) are compositionally biased toward basic residues. Ser376 and Ser401 each carry phosphoserine. Residues 397-407 (ILQNSPPLSSK) are compositionally biased toward polar residues. The short motif at 452–468 (PKKAKSRLITSGCKVKK) is the Bipartite nuclear localization signal element. 2 positions are modified to phosphoserine: Ser480 and Ser560. Residues 579 to 774 (IREEIITKEI…ELIAKLGKTD (196 aa)) adopt a coiled-coil conformation. The interval 670-774 (VLEGFKKNEE…ELIAKLGKTD (105 aa)) is interaction with CH-TOG.

Belongs to the TACC family. Interacts with CH-TOG and YEATS4. Interacts with the AURKA and AURKB and AURKC. Interacts with LSM7, TDRD7 and SNRPG. Interacts with GCN5L2 and PCAF. Interacts with the thyroid hormone receptors THRB and THRA, predominantly with isoform alpha-2. The interaction with THRA isoform alpha-1 and THRB is decreased in the presence of thyroid hormone T3. Interacts with RARA in the nucleus. Also interacts with other nuclear receptors, including ESR1, NR3C1, PPARG and RXRA, preferentially in the absence of their hormonal ligands.

It localises to the cytoplasm. It is found in the nucleus. Its subcellular location is the cytoskeleton. The protein localises to the microtubule organizing center. The protein resides in the centrosome. It localises to the midbody. Functionally, involved in transcription regulation induced by nuclear receptors, including in T3 thyroid hormone and all-trans retinoic acid pathways. Might promote the nuclear localization of the receptors. Likely involved in the processes that promote cell division prior to the formation of differentiated tissues. This chain is Transforming acidic coiled-coil-containing protein 1 (Tacc1), found in Mus musculus (Mouse).